The chain runs to 138 residues: Putative nickel-responsive regulator (138 aa).

His-78, His-89, His-91, and Cys-97 together coordinate Ni(2+).

This sequence belongs to the transcriptional regulatory CopG/NikR family. Requires Ni(2+) as cofactor.

Transcriptional regulator. The protein is Putative nickel-responsive regulator of Thermococcus kodakarensis (strain ATCC BAA-918 / JCM 12380 / KOD1) (Pyrococcus kodakaraensis (strain KOD1)).